A 385-amino-acid polypeptide reads, in one-letter code: S-adenosylmethionine synthase (385 aa).

Position 16 (His-16) interacts with ATP. Asp-18 contributes to the Mg(2+) binding site. A K(+)-binding site is contributed by Glu-44. Glu-57 and Gln-100 together coordinate L-methionine. Residues 100-110 (QSPDINQGVDR) are flexible loop. ATP is bound by residues 164–166 (DGK), 230–231 (KF), Asp-239, 245–246 (RK), Ala-262, and Lys-266. Asp-239 provides a ligand contact to L-methionine. Residue Lys-270 participates in L-methionine binding.

It belongs to the AdoMet synthase family. In terms of assembly, homotetramer; dimer of dimers. It depends on Mg(2+) as a cofactor. K(+) is required as a cofactor.

Its subcellular location is the cytoplasm. The enzyme catalyses L-methionine + ATP + H2O = S-adenosyl-L-methionine + phosphate + diphosphate. The protein operates within amino-acid biosynthesis; S-adenosyl-L-methionine biosynthesis; S-adenosyl-L-methionine from L-methionine: step 1/1. Its function is as follows. Catalyzes the formation of S-adenosylmethionine (AdoMet) from methionine and ATP. The overall synthetic reaction is composed of two sequential steps, AdoMet formation and the subsequent tripolyphosphate hydrolysis which occurs prior to release of AdoMet from the enzyme. In Helicobacter pylori (strain G27), this protein is S-adenosylmethionine synthase.